We begin with the raw amino-acid sequence, 123 residues long: Small ribosomal subunit protein uS12 (123 aa).

Aspartate 89 is subject to 3-methylthioaspartic acid. The tract at residues 101–123 is disordered; that stretch reads TLDTSGVSDRRQSRSKYGAKRPK. Residues 113-123 are compositionally biased toward basic residues; that stretch reads SRSKYGAKRPK.

The protein belongs to the universal ribosomal protein uS12 family. As to quaternary structure, part of the 30S ribosomal subunit. Contacts proteins S8 and S17. May interact with IF1 in the 30S initiation complex.

Functionally, with S4 and S5 plays an important role in translational accuracy. In terms of biological role, interacts with and stabilizes bases of the 16S rRNA that are involved in tRNA selection in the A site and with the mRNA backbone. Located at the interface of the 30S and 50S subunits, it traverses the body of the 30S subunit contacting proteins on the other side and probably holding the rRNA structure together. The combined cluster of proteins S8, S12 and S17 appears to hold together the shoulder and platform of the 30S subunit. The chain is Small ribosomal subunit protein uS12 from Solidesulfovibrio magneticus (strain ATCC 700980 / DSM 13731 / RS-1) (Desulfovibrio magneticus).